Consider the following 884-residue polypeptide: Telomerase reverse transcriptase (884 aa).

The Reverse transcriptase domain occupies 422–725 (CRNHNSYTLS…TVIQFCAMHI (304 aa)). Mg(2+) contacts are provided by Asp-530, Asp-670, and Asp-671.

This sequence belongs to the reverse transcriptase family. Telomerase subfamily. In terms of assembly, catalytic subunit of the telomerase holoenzyme complex composed minimally of EST2 and the telomerase RNA template component.

Its subcellular location is the nucleus. The protein resides in the chromosome. It localises to the telomere. It catalyses the reaction DNA(n) + a 2'-deoxyribonucleoside 5'-triphosphate = DNA(n+1) + diphosphate. Functionally, telomerase is a ribonucleoprotein enzyme essential for the replication of chromosome termini in most eukaryotes. It elongates telomeres. It is a reverse transcriptase that adds simple sequence repeats to chromosome ends by copying a template sequence within the RNA component of the enzyme. In Saccharomyces cerevisiae (strain ATCC 204508 / S288c) (Baker's yeast), this protein is Telomerase reverse transcriptase (EST2).